Reading from the N-terminus, the 498-residue chain is ATP synthase subunit beta, chloroplastic (498 aa).

Residue 172 to 179 (GGAGVGKT) participates in ATP binding.

Belongs to the ATPase alpha/beta chains family. F-type ATPases have 2 components, CF(1) - the catalytic core - and CF(0) - the membrane proton channel. CF(1) has five subunits: alpha(3), beta(3), gamma(1), delta(1), epsilon(1). CF(0) has four main subunits: a(1), b(1), b'(1) and c(9-12).

The protein resides in the plastid. It localises to the chloroplast thylakoid membrane. The catalysed reaction is ATP + H2O + 4 H(+)(in) = ADP + phosphate + 5 H(+)(out). Its function is as follows. Produces ATP from ADP in the presence of a proton gradient across the membrane. The catalytic sites are hosted primarily by the beta subunits. The sequence is that of ATP synthase subunit beta, chloroplastic from Montinia caryophyllacea (Wild clove bush).